Here is a 746-residue protein sequence, read N- to C-terminus: Quiannulatene synthase (746 aa).

A sesterterpenoid synthase region spans residues Met-1–Asn-336. Asp-95 lines the Mg(2+) pocket. The tract at residues Pro-338–Val-746 is geranylfarnesyl diphosphate synthase. Residues Lys-465, Arg-468, and His-497 each coordinate isopentenyl diphosphate. Mg(2+) is bound by residues Asp-504 and Asp-508. A dimethylallyl diphosphate-binding site is contributed by Arg-513. Arg-514 provides a ligand contact to isopentenyl diphosphate. Dimethylallyl diphosphate-binding residues include Lys-591, Thr-592, Gln-628, Asn-635, and Lys-645.

In the N-terminal section; belongs to the terpene synthase family. It in the C-terminal section; belongs to the FPP/GGPP synthase family. Mg(2+) is required as a cofactor.

It carries out the reaction isopentenyl diphosphate + (2E,6E)-farnesyl diphosphate = (2E,6E,10E)-geranylgeranyl diphosphate + diphosphate. It catalyses the reaction (2E,6E,10E,14E)-geranylfarnesyl diphosphate = quiannulatene + diphosphate. It functions in the pathway secondary metabolite biosynthesis; terpenoid biosynthesis. Functionally, bifunctional sesterterpene synthase; part of the gene cluster that mediates the biosynthesis of the pentacyclic sesterterpene quiannulatic acid. The first step of the pathway is performed by the sesterterpene synthase (QS) that possesses both prenyl transferase and terpene cyclase activity, converting isopentenyl diphosphate and dimethylallyl diphosphate into geranylfarnesyl diphosphate (GFPP) and further converting GFPP into quiannulatene via an unprecedented cyclization mode which involves three rounds of hydride shifts and two successive C-C bond migrations to construct the 5-6-5-5-5 fused ring. The cytochrome P450 monooxygenase Qnn-P450 then oxidizes quiannulatene at C-19 in 3 successive reactions to afford quiannulatic acid. In Emericella variicolor (Aspergillus stellatus), this protein is Quiannulatene synthase.